A 257-amino-acid chain; its full sequence is Phycoerythrobilin:ferredoxin oxidoreductase (257 aa).

It belongs to the HY2 family.

The enzyme catalyses (3Z)-phycoerythrobilin + oxidized 2[4Fe-4S]-[ferredoxin] = 15,16-dihydrobiliverdin + reduced 2[4Fe-4S]-[ferredoxin] + 2 H(+). Its function is as follows. Catalyzes the two-electron reduction of the C2 and C3(1) diene system of 15,16-dihydrobiliverdin. The chain is Phycoerythrobilin:ferredoxin oxidoreductase from Synechococcus sp. (strain CC9902).